Reading from the N-terminus, the 282-residue chain is Undecaprenyl-diphosphatase (282 aa).

Helical transmembrane passes span 96–116 (WMVI…KDII), 123–143 (MWIT…AEKW), 198–218 (FLLA…DAFA), 229–249 (QLAV…AWLL), and 260–280 (FAAY…TGML).

Belongs to the UppP family.

The protein localises to the cell membrane. It catalyses the reaction di-trans,octa-cis-undecaprenyl diphosphate + H2O = di-trans,octa-cis-undecaprenyl phosphate + phosphate + H(+). Functionally, catalyzes the dephosphorylation of undecaprenyl diphosphate (UPP). Confers resistance to bacitracin. The sequence is that of Undecaprenyl-diphosphatase from Corynebacterium diphtheriae (strain ATCC 700971 / NCTC 13129 / Biotype gravis).